Here is a 222-residue protein sequence, read N- to C-terminus: Dual specificity phosphatase 29 (222 aa).

A Tyrosine-protein phosphatase domain is found at 54–202; the sequence is HVNEVWPKLY…LRELDKQLVQ (149 aa). 146 to 153 serves as a coordination point for substrate; it reads HCAMGRSR. Catalysis depends on Cys147, which acts as the Phosphocysteine intermediate. A disordered region spans residues 201 to 222; it reads VQQRRGAQHRGEAGEKAGEKEP. Residues 209–222 show a composition bias toward basic and acidic residues; that stretch reads HRGEAGEKAGEKEP.

Belongs to the protein-tyrosine phosphatase family. Non-receptor class dual specificity subfamily. As to quaternary structure, homodimer. Interacts with PRKAA2.

The protein localises to the cytoplasm. Its subcellular location is the nucleus. It carries out the reaction O-phospho-L-tyrosyl-[protein] + H2O = L-tyrosyl-[protein] + phosphate. The catalysed reaction is O-phospho-L-seryl-[protein] + H2O = L-seryl-[protein] + phosphate. The enzyme catalyses O-phospho-L-threonyl-[protein] + H2O = L-threonyl-[protein] + phosphate. In terms of biological role, dual specificity phosphatase able to dephosphorylate phosphotyrosine, phosphoserine and phosphothreonine residues within the same substrate, with a preference for phosphotyrosine as a substrate. Involved in the modulation of intracellular signaling cascades. In skeletal muscle regulates systemic glucose homeostasis by activating, AMPK, an energy sensor protein kinase. Affects MAP kinase signaling though modulation of the MAPK1/2 cascade in skeletal muscle promoting muscle cell differentiation, development and atrophy. This chain is Dual specificity phosphatase 29 (DUSP29), found in Sus scrofa (Pig).